A 500-amino-acid chain; its full sequence is NAD(P)H-quinone oxidoreductase subunit 2 B, chloroplastic (500 aa).

The next 13 membrane-spanning stretches (helical) occupy residues 14 to 34 (SILP…IDLT), 41 to 61 (WLYF…LFQL), 78 to 98 (FNGI…PLSM), 116 to 136 (LTAT…IIFI), 166 to 186 (LLMG…LYGL), 211 to 231 (ISIV…LVPF), 242 to 262 (APTS…LALA), 277 to 297 (WHLI…FIAI), 305 to 325 (MLAY…IAGD), 335 to 355 (YMLF…LFGL), 376 to 396 (ASFL…AGFF), 409 to 429 (GLYL…YYYL), and 467 to 487 (IIIC…VIAI).

Belongs to the complex I subunit 2 family. In terms of assembly, NDH is composed of at least 16 different subunits, 5 of which are encoded in the nucleus.

It localises to the plastid. The protein resides in the chloroplast thylakoid membrane. It catalyses the reaction a plastoquinone + NADH + (n+1) H(+)(in) = a plastoquinol + NAD(+) + n H(+)(out). The enzyme catalyses a plastoquinone + NADPH + (n+1) H(+)(in) = a plastoquinol + NADP(+) + n H(+)(out). In terms of biological role, NDH shuttles electrons from NAD(P)H:plastoquinone, via FMN and iron-sulfur (Fe-S) centers, to quinones in the photosynthetic chain and possibly in a chloroplast respiratory chain. The immediate electron acceptor for the enzyme in this species is believed to be plastoquinone. Couples the redox reaction to proton translocation, and thus conserves the redox energy in a proton gradient. The chain is NAD(P)H-quinone oxidoreductase subunit 2 B, chloroplastic from Anthoceros angustus (Hornwort).